Reading from the N-terminus, the 291-residue chain is Tyrosine recombinase XerD (291 aa).

The 82-residue stretch at Met-1–Glu-82 folds into the Core-binding (CB) domain. The region spanning Asn-103 to Lys-285 is the Tyr recombinase domain. Active-site residues include Arg-143, Lys-167, His-237, Arg-240, and His-263. The active-site O-(3'-phospho-DNA)-tyrosine intermediate is the Tyr-272.

It belongs to the 'phage' integrase family. XerD subfamily. As to quaternary structure, forms a cyclic heterotetrameric complex composed of two molecules of XerC and two molecules of XerD.

It localises to the cytoplasm. Functionally, site-specific tyrosine recombinase, which acts by catalyzing the cutting and rejoining of the recombining DNA molecules. The XerC-XerD complex is essential to convert dimers of the bacterial chromosome into monomers to permit their segregation at cell division. It also contributes to the segregational stability of plasmids. In Neisseria meningitidis serogroup A / serotype 4A (strain DSM 15465 / Z2491), this protein is Tyrosine recombinase XerD.